Reading from the N-terminus, the 198-residue chain is tRNA (pseudouridine(54)-N(1))-methyltransferase (198 aa).

Residues Leu-130, Gly-153, 176–181, and Cys-186 each bind S-adenosyl-L-methionine; that span reads LSPLEL.

The protein belongs to the methyltransferase superfamily. TrmY family. As to quaternary structure, homodimer.

It localises to the cytoplasm. It catalyses the reaction pseudouridine(54) in tRNA + S-adenosyl-L-methionine = N(1)-methylpseudouridine(54) in tRNA + S-adenosyl-L-homocysteine + H(+). Functionally, specifically catalyzes the N1-methylation of pseudouridine at position 54 (Psi54) in tRNAs. The chain is tRNA (pseudouridine(54)-N(1))-methyltransferase from Methanococcus maripaludis (strain C5 / ATCC BAA-1333).